A 326-amino-acid chain; its full sequence is GTP 3',8-cyclase (326 aa).

One can recognise a Radical SAM core domain in the interval Lys-4–Asn-227. Arg-13 is a binding site for GTP. Residues Cys-20 and Cys-24 each contribute to the [4Fe-4S] cluster site. Tyr-26 serves as a coordination point for S-adenosyl-L-methionine. Residue Cys-27 coordinates [4Fe-4S] cluster. Position 63 (Arg-63) interacts with GTP. Gly-67 is an S-adenosyl-L-methionine binding site. Thr-94 lines the GTP pocket. Ser-118 is a binding site for S-adenosyl-L-methionine. Lys-155 provides a ligand contact to GTP. S-adenosyl-L-methionine is bound at residue Met-189. 2 residues coordinate [4Fe-4S] cluster: Cys-253 and Cys-256. A GTP-binding site is contributed by Arg-258–Arg-260. Cys-270 contacts [4Fe-4S] cluster.

It belongs to the radical SAM superfamily. MoaA family. Monomer and homodimer. [4Fe-4S] cluster serves as cofactor.

It catalyses the reaction GTP + AH2 + S-adenosyl-L-methionine = (8S)-3',8-cyclo-7,8-dihydroguanosine 5'-triphosphate + 5'-deoxyadenosine + L-methionine + A + H(+). Its pathway is cofactor biosynthesis; molybdopterin biosynthesis. Its function is as follows. Catalyzes the cyclization of GTP to (8S)-3',8-cyclo-7,8-dihydroguanosine 5'-triphosphate. This chain is GTP 3',8-cyclase, found in Syntrophomonas wolfei subsp. wolfei (strain DSM 2245B / Goettingen).